A 282-amino-acid polypeptide reads, in one-letter code: Succinate dehydrogenase [ubiquinone] iron-sulfur subunit, mitochondrial (282 aa).

A mitochondrion-targeting transit peptide spans 1 to 21; the sequence is MLRGSTSVCRSLELVTQAARY. Residues 39–129 form the 2Fe-2S ferredoxin-type domain; the sequence is EIYRFNPEEP…TTKIYPLPHM (91 aa). The [2Fe-2S] cluster site is built by Cys89, Cys94, Cys97, and Cys109. The 4Fe-4S ferredoxin-type domain occupies 172 to 202; the sequence is EQEKLDGLYECILCACCSASCPSYWWNADKY. Residues Cys182, Cys185, and Cys188 each contribute to the [4Fe-4S] cluster site. A [3Fe-4S] cluster-binding site is contributed by Cys192. Trp197 is an a rhodoquinol binding site. Residue Trp197 participates in a ubiquinone binding. Residues Cys239 and Cys245 each contribute to the [3Fe-4S] cluster site. Residue Cys249 participates in [4Fe-4S] cluster binding.

Belongs to the succinate dehydrogenase/fumarate reductase iron-sulfur protein family. In terms of assembly, component of the mitochondrial electron transport chain complex II composed of four subunits: a flavoprotein (Fp), an iron-sulfur protein (Ip), and a large cytochrome b (CybL) subunit and a small cytochrome b (CybS) subunit. There are 2 developmental stage-specific forms of complex II which have the Ip and CybL subunits in common. Complex II from the free-living larvae (aerobic environment) acts as a succinate dehydrogenase and is composed of the common subunit Ip and CybL and the stage specific subunits FpL and CybSL. Complex II from parasitic larvae and adults (anaerobic environment) acts as a fumarate reductase and is composed of the common subunit Ip and CybL and the stage specific subunits FpA and CybSA. The cofactor is [2Fe-2S] cluster. It depends on [3Fe-4S] cluster as a cofactor. Requires [4Fe-4S] cluster as cofactor. In terms of tissue distribution, expressed in adult muscles (at protein level).

It is found in the mitochondrion inner membrane. It carries out the reaction a ubiquinone + succinate = a ubiquinol + fumarate. The catalysed reaction is a rhodoquinone + succinate = a rhodoquinol + fumarate. Its pathway is carbohydrate metabolism; tricarboxylic acid cycle; fumarate from succinate (eukaryal route): step 1/1. Its activity is regulated as follows. Inhibited by the fungicide flutolanil. Its function is as follows. Iron-sulfur protein (Ip) subunit of the mitochondrial electron transport chain complex II which, together with the flavoprotein (Fp) subunit forms the catalytic core of the complex. During the free-living egg-larvae stages, which occur in an aerobic environment, complex II acts as a succinate dehydrogenase by transferring electrons from succinate to ubiquinone. During the parasitic larvae and adult stages, which occur in an anaerobic environment, complex II acts as a fumarate reductase by transferring electrons from rhodoquinol to fumarate. In Ascaris suum (Pig roundworm), this protein is Succinate dehydrogenase [ubiquinone] iron-sulfur subunit, mitochondrial.